An 863-amino-acid polypeptide reads, in one-letter code: Receptor-like protein 9DC3 (863 aa).

Residues 1 to 21 (MGCVKLVFFMLYVFLFQLVSS) form the signal peptide. The Extracellular portion of the chain corresponds to 22–812 (SSLPHLCPED…EEDSPMISWQ (791 aa)). Residues 24–90 (LPHLCPEDQA…GVHCDETTGQ (67 aa)) are N-cap. 2 N-linked (GlcNAc...) asparagine glycosylation sites follow: Asn-71 and Asn-108. An LRR 1; degenerate repeat occupies 91–114 (VIALDLRCSQLQGKFHSNSSLFQL). 2 LRR repeats span residues 115-138 (SNLK…KFGE) and 140-163 (SDLT…ISHL). The LRR 4; degenerate repeat unit spans residues 164-190 (SKLHVLLIGDQYGLSIVPHNFEPLLKN). Asn-190, Asn-203, and Asn-211 each carry an N-linked (GlcNAc...) asparagine glycan. LRR repeat units lie at residues 191–213 (LTQL…SNFS), 214–237 (SHLT…VFHL), 240–262 (LEFL…KWNS), 264–286 (ASLM…SFSH), 287–311 (LTSL…LWNL), and 312–336 (TNIE…IFEK). Asn-261 carries an N-linked (GlcNAc...) asparagine glycan. N-linked (GlcNAc...) asparagine glycosylation is found at Asn-299 and Asn-310. Residues 337-357 (LKKLSLFRNDNLDGGLEFLSF) form an LRR 11; degenerate repeat. LRR repeat units follow at residues 358 to 382 (NTQL…ISGL), 383 to 406 (QNLE…IFSL), 408 to 428 (SLVE…EFKS), 429 to 452 (KTLS…LLNQ), 454 to 476 (NLQL…ICNL), 477 to 500 (KTLI…VVER), 502 to 524 (EYLS…TFSV), 525 to 549 (GNIL…LINC), 551 to 572 (YLAL…WLGH), 573 to 597 (LSQL…GNTN), 599 to 623 (FTRL…ILGN), 667 to 690 (LDSN…IIGD), 691 to 714 (LVGL…SFQN), 715 to 739 (LSVL…LASL), and 741 to 759 (FLEV…IPKG). Asn-378, Asn-396, and Asn-416 each carry an N-linked (GlcNAc...) asparagine glycan. A glycan (N-linked (GlcNAc...) asparagine) is linked at Asn-464. N-linked (GlcNAc...) asparagine glycosylation occurs at Asn-519. Asn-563 is a glycosylation site (N-linked (GlcNAc...) asparagine). Asn-674, Asn-698, and Asn-714 each carry an N-linked (GlcNAc...) asparagine glycan. N-linked (GlcNAc...) asparagine glycosylation is found at Asn-746 and Asn-767. The segment at 760–812 (KQFDSFGNTSYQGNDGLCGFPLSKLCGGDDQVTTPAELDQEEEEEDSPMISWQ) is C-cap/acidic domain. The chain crosses the membrane as a helical span at residues 813 to 833 (GVLVGYGCGLVIGLSVIYIMW). Residues 834-863 (STQYPAWFSRMHLKLEQIVTTRMKKHKKRY) are Cytoplasmic-facing.

Belongs to the RLP family.

The protein localises to the cell membrane. Involved in plant defense. Confers resistance to the fungal pathogen C.fulvum through recognition of the AVR9 elicitor protein. This is Receptor-like protein 9DC3 from Solanum pimpinellifolium (Currant tomato).